The chain runs to 438 residues: Trigger factor (438 aa).

Residues 160–231 enclose the PPIase FKBP-type domain; sequence SDQVTIEEQG…IMDVKTKQLQ (72 aa). A disordered region spans residues 407-438; it reads AQLSGPQAETVAADQGEQQAEGQEESAEKSEE. Over residues 418–427 the composition is skewed to low complexity; it reads AADQGEQQAE.

It belongs to the FKBP-type PPIase family. Tig subfamily.

It is found in the cytoplasm. The enzyme catalyses [protein]-peptidylproline (omega=180) = [protein]-peptidylproline (omega=0). Involved in protein export. Acts as a chaperone by maintaining the newly synthesized protein in an open conformation. Functions as a peptidyl-prolyl cis-trans isomerase. The chain is Trigger factor from Deinococcus deserti (strain DSM 17065 / CIP 109153 / LMG 22923 / VCD115).